The following is a 732-amino-acid chain: Inducible ornithine decarboxylase (732 aa).

Residue Lys355 is modified to N6-(pyridoxal phosphate)lysine.

Belongs to the Orn/Lys/Arg decarboxylase class-I family. Pyridoxal 5'-phosphate is required as a cofactor.

The enzyme catalyses L-ornithine + H(+) = putrescine + CO2. Its pathway is amine and polyamine biosynthesis; putrescine biosynthesis via L-ornithine pathway; putrescine from L-ornithine: step 1/1. Its function is as follows. The first enzyme leading to putrescine and thus polyamine synthesis. The protein is Inducible ornithine decarboxylase of Escherichia coli (strain K12).